Reading from the N-terminus, the 357-residue chain is Mitogen-activated protein kinase kinase SIPKK (357 aa).

Positions 70–330 (FEAVKVIGKG…ANELMRHPFI (261 aa)) constitute a Protein kinase domain. ATP-binding positions include 76–84 (IGKGNGGIV) and lysine 99. Aspartate 192 (proton acceptor) is an active-site residue.

The protein belongs to the protein kinase superfamily. STE Ser/Thr protein kinase family. MAP kinase kinase subfamily. As to quaternary structure, interacts with SIPK.

The enzyme catalyses L-tyrosyl-[protein] + ATP = O-phospho-L-tyrosyl-[protein] + ADP + H(+). It carries out the reaction L-seryl-[protein] + ATP = O-phospho-L-seryl-[protein] + ADP + H(+). It catalyses the reaction L-threonyl-[protein] + ATP = O-phospho-L-threonyl-[protein] + ADP + H(+). Its function is as follows. Phosphorylates myelin basic protein (MBP) in vitro. May be involved in disease resistance. The polypeptide is Mitogen-activated protein kinase kinase SIPKK (Nicotiana tabacum (Common tobacco)).